A 301-amino-acid chain; its full sequence is uncharacterized protein (301 aa).

The first 25 residues, 1–25 (MKFKNTLSIFKILIILFSFYNVAFS), serve as a signal peptide directing secretion. The Extracellular portion of the chain corresponds to 26–279 (DDTEKYTFKG…STTGSKDSST (254 aa)). A disordered region spans residues 174–281 (LYTGSSNTPN…TGSKDSSTGN (108 aa)). Residues asparagine 191, asparagine 212, asparagine 234, and asparagine 241 are each glycosylated (N-linked (GlcNAc...) asparagine). Residues 204–234 (SSSDSTNSNSSSTDTASSSPSSSPSSSPSPN) are compositionally biased toward low complexity. Over residues 254–281 (GGVETSTAGSSTGTTSSTTGSKDSSTGN) the composition is skewed to low complexity. Residues 280–300 (GNSILPTLIIVTFFVLTLVIM) traverse the membrane as a helical segment. Position 301 (serine 301) is a topological domain, cytoplasmic.

The protein localises to the membrane. This is an uncharacterized protein from Dictyostelium discoideum (Social amoeba).